The chain runs to 440 residues: Glucoside xylosyltransferase 1 (440 aa).

Topologically, residues 1 to 6 (MRRYLR) are cytoplasmic. A helical; Signal-anchor for type II membrane protein transmembrane segment spans residues 7-29 (VVVLCVACGFCSLLYAFSQLAVS). At 30–440 (LEEGTGGGGG…DRYARSPKEK (411 aa)) the chain is on the lumenal side. N173, N237, and N278 each carry an N-linked (GlcNAc...) asparagine glycan.

Belongs to the glycosyltransferase 8 family.

The protein resides in the membrane. The enzyme catalyses 3-O-(beta-D-glucosyl)-L-seryl-[EGF-like domain protein] + UDP-alpha-D-xylose = 3-O-[alpha-D-xylosyl-(1-&gt;3)-beta-D-glucosyl]-L-seryl-[EGF-like domain protein] + UDP + H(+). Its function is as follows. Glycosyltransferase which elongates the O-linked glucose attached to EGF-like repeats in the extracellular domain of Notch proteins by catalyzing the addition of xylose. The polypeptide is Glucoside xylosyltransferase 1 (GXYLT1) (Homo sapiens (Human)).